Here is a 276-residue protein sequence, read N- to C-terminus: NH(3)-dependent NAD(+) synthetase (276 aa).

43–50 (GISGGVDS) lines the ATP pocket. Asp49 lines the Mg(2+) pocket. A deamido-NAD(+)-binding site is contributed by Arg146. ATP is bound at residue Thr166. Glu171 lines the Mg(2+) pocket. Deamido-NAD(+) contacts are provided by Lys179 and Asp186. Positions 195 and 217 each coordinate ATP. A deamido-NAD(+)-binding site is contributed by 266-267 (HK).

This sequence belongs to the NAD synthetase family. As to quaternary structure, homodimer.

It catalyses the reaction deamido-NAD(+) + NH4(+) + ATP = AMP + diphosphate + NAD(+) + H(+). It participates in cofactor biosynthesis; NAD(+) biosynthesis; NAD(+) from deamido-NAD(+) (ammonia route): step 1/1. Its function is as follows. Catalyzes the ATP-dependent amidation of deamido-NAD to form NAD. Uses ammonia as a nitrogen source. In Shewanella baltica (strain OS223), this protein is NH(3)-dependent NAD(+) synthetase.